Here is a 216-residue protein sequence, read N- to C-terminus: GTPase IMAP family member GIMD1 (216 aa).

The AIG1-type G domain occupies 5-216; sequence KMIINLAVLG…ENHFQVLSFT (212 aa). GTP is bound by residues 14-22, Ser-35, and 147-149; these read GKTQSGKSS and HAE.

Belongs to the TRAFAC class TrmE-Era-EngA-EngB-Septin-like GTPase superfamily. AIG1/Toc34/Toc159-like paraseptin GTPase family. IAN subfamily.

This chain is GTPase IMAP family member GIMD1 (Gimd1), found in Rattus norvegicus (Rat).